Consider the following 89-residue polypeptide: Arminin 7591 (89 aa).

The N-terminal stretch at 1–18 is a signal peptide; the sequence is MRSAFAVLFLALIAITYS. The propeptide occupies 19–58; the sequence is KNYEDVKEEIKNEVENEILKDLEEDVNEFDDNVQEEVNDA. Leu86 carries the post-translational modification Leucine amide.

It belongs to the arminin family. As to expression, expressed in entodermal epithelium along the body column.

The protein resides in the secreted. Its subcellular location is the target cell membrane. Antimicrobial peptide with a broad-spectrum antimicrobial activity. Keeps its antibacterial activity under a wide range of salt concentrations that mimic physiological conditions of human blood, which is surprising, since Hydra is an obligate freshwater animal with nearly no salt tolerance. Does not affect red blood cells. The chain is Arminin 7591 from Hydra vulgaris (Hydra).